Consider the following 95-residue polypeptide: Small ribosomal subunit protein uS19 (95 aa).

This sequence belongs to the universal ribosomal protein uS19 family.

Functionally, protein S19 forms a complex with S13 that binds strongly to the 16S ribosomal RNA. The sequence is that of Small ribosomal subunit protein uS19 from Chloroflexus aggregans (strain MD-66 / DSM 9485).